The primary structure comprises 350 residues: Hydroxymethylglutaryl-CoA synthase (350 aa).

Residue Glu83 is the Proton donor/acceptor of the active site. Cys115 acts as the Acyl-thioester intermediate in catalysis. Cys115 and Thr156 together coordinate (3S)-3-hydroxy-3-methylglutaryl-CoA. Arg204 provides a ligand contact to CoA. (3S)-3-hydroxy-3-methylglutaryl-CoA contacts are provided by Thr206 and His239. His239 functions as the Proton donor/acceptor in the catalytic mechanism. A CoA-binding site is contributed by Lys244. 2 residues coordinate (3S)-3-hydroxy-3-methylglutaryl-CoA: Asn271 and Ser301.

Belongs to the thiolase-like superfamily. Archaeal HMG-CoA synthase family. Interacts with acetoacetyl-CoA thiolase that catalyzes the precedent step in the pathway and with a DUF35 protein. The acetoacetyl-CoA thiolase/HMG-CoA synthase complex channels the intermediate via a fused CoA-binding site, which allows for efficient coupling of the endergonic thiolase reaction with the exergonic HMGCS reaction.

The catalysed reaction is acetoacetyl-CoA + acetyl-CoA + H2O = (3S)-3-hydroxy-3-methylglutaryl-CoA + CoA + H(+). It participates in metabolic intermediate biosynthesis; (R)-mevalonate biosynthesis; (R)-mevalonate from acetyl-CoA: step 2/3. Its function is as follows. Catalyzes the condensation of acetyl-CoA with acetoacetyl-CoA to form 3-hydroxy-3-methylglutaryl-CoA (HMG-CoA). Functions in the mevalonate (MVA) pathway leading to isopentenyl diphosphate (IPP), a key precursor for the biosynthesis of isoprenoid compounds that are building blocks of archaeal membrane lipids. This Thermococcus gammatolerans (strain DSM 15229 / JCM 11827 / EJ3) protein is Hydroxymethylglutaryl-CoA synthase.